An 89-amino-acid polypeptide reads, in one-letter code: GTP cyclohydrolase 1 feedback regulatory protein (89 aa).

It belongs to the GFRP family. In terms of assembly, homopentamer. Forms a complex with GCH1 where a GCH1 homodecamer is sandwiched by two GFRP homopentamers.

It is found in the nucleus. The protein localises to the nucleus membrane. It localises to the cytoplasm. The protein resides in the cytosol. Mediates tetrahydrobiopterin inhibition of GTP cyclohydrolase 1. In Danio rerio (Zebrafish), this protein is GTP cyclohydrolase 1 feedback regulatory protein (gchfr).